The following is a 447-amino-acid chain: Probable alpha-galactosidase B (447 aa).

A signal peptide spans 1–25; sequence MTTFFSLTTAAAVLTLARGSNALVR. Disulfide bonds link Cys45–Cys77 and Cys127–Cys157. Asp155 acts as the Nucleophile in catalysis. Asn162 and Asn180 each carry an N-linked (GlcNAc...) asparagine glycan. 225–229 contacts substrate; the sequence is EWGQA. The N-linked (GlcNAc...) asparagine glycan is linked to Asn236. Asp247 acts as the Proton donor in catalysis. Asn286 carries an N-linked (GlcNAc...) asparagine glycan.

Belongs to the glycosyl hydrolase 27 family.

It localises to the secreted. It catalyses the reaction Hydrolysis of terminal, non-reducing alpha-D-galactose residues in alpha-D-galactosides, including galactose oligosaccharides, galactomannans and galactolipids.. Hydrolyzes a variety of simple alpha-D-galactoside as well as more complex molecules such as oligosaccharides and polysaccharides. This Aspergillus fumigatus (strain ATCC MYA-4609 / CBS 101355 / FGSC A1100 / Af293) (Neosartorya fumigata) protein is Probable alpha-galactosidase B (aglB).